A 703-amino-acid chain; its full sequence is DNA ligase (703 aa).

Residues Asp44–Asp48, Ser93–Leu94, and Glu127 each bind NAD(+). Lys129 serves as the catalytic N6-AMP-lysine intermediate. NAD(+)-binding residues include Arg150, Glu186, Lys302, and Lys326. The Zn(2+) site is built by Cys420, Cys422, Cys444, and Cys450. In terms of domain architecture, BRCT spans Val625–Ala703.

It belongs to the NAD-dependent DNA ligase family. LigA subfamily. It depends on Mg(2+) as a cofactor. Requires Mn(2+) as cofactor.

The catalysed reaction is NAD(+) + (deoxyribonucleotide)n-3'-hydroxyl + 5'-phospho-(deoxyribonucleotide)m = (deoxyribonucleotide)n+m + AMP + beta-nicotinamide D-nucleotide.. Functionally, DNA ligase that catalyzes the formation of phosphodiester linkages between 5'-phosphoryl and 3'-hydroxyl groups in double-stranded DNA using NAD as a coenzyme and as the energy source for the reaction. It is essential for DNA replication and repair of damaged DNA. In Chelativorans sp. (strain BNC1), this protein is DNA ligase.